Here is a 188-residue protein sequence, read N- to C-terminus: Putative manganese efflux pump MntP (188 aa).

A run of 6 helical transmembrane segments spans residues 3–23, 35–55, 63–83, 107–127, 131–151, and 167–187; these read FYAL…VALA, IAAT…AGWV, FISE…GLKM, VLTA…LAFM, IAFA…VGLA, and AGGL…LGLI.

This sequence belongs to the MntP (TC 9.B.29) family.

It is found in the cell inner membrane. Its function is as follows. Probably functions as a manganese efflux pump. The sequence is that of Putative manganese efflux pump MntP from Neisseria meningitidis serogroup A / serotype 4A (strain DSM 15465 / Z2491).